We begin with the raw amino-acid sequence, 241 residues long: PRA1 family protein H (241 aa).

The next 3 membrane-spanning stretches (helical) occupy residues 142–162 (LFIV…VGLL), 189–205 (LSIG…LTFL), and 209–228 (MALF…HAGF).

The protein belongs to the PRA1 family.

The protein resides in the endoplasmic reticulum membrane. In terms of biological role, may be involved in both secretory and endocytic intracellular trafficking in the endosomal/prevacuolar compartments. The sequence is that of PRA1 family protein H (PRA1H) from Arabidopsis thaliana (Mouse-ear cress).